An 85-amino-acid polypeptide reads, in one-letter code: Dynein light chain 1, cytoplasmic (85 aa).

Belongs to the dynein light chain family. In terms of assembly, homodimer. Cytoplasmic dynein consists of two catalytic heavy chains (HCs) and a number of non-catalytic subunits which present intermediate chains (ICs), light intermediate chains (LICs) and light chains (LCs). Component of the nuclear pore complex (NPC). NPC constitutes the exclusive means of nucleocytoplasmic transport. NPCs allow the passive diffusion of ions and small molecules and the active, nuclear transport receptor-mediated bidirectional transport of macromolecules such as proteins, RNAs, ribonucleoparticles (RNPs), and ribosomal subunits across the nuclear envelope. Due to its 8-fold rotational symmetry, all subunits are present with 8 copies or multiples thereof.

Its subcellular location is the cytoplasm. It is found in the cytoskeleton. The protein localises to the nucleus. The protein resides in the nuclear pore complex. In terms of biological role, acts as one of several non-catalytic accessory components of the cytoplasmic dynein complex that are thought to be involved in linking dynein to cargos and to adapter proteins that regulate dynein function. Cytoplasmic dynein 1 acts as a motor for the intracellular retrograde motility of vesicles and organelles along microtubules. May play a role in changing or maintaining the spatial distribution of cytoskeletal structures. Also a component of the nuclear pore complex. The protein is Dynein light chain 1, cytoplasmic (dlc2) of Schizosaccharomyces pombe (strain 972 / ATCC 24843) (Fission yeast).